Reading from the N-terminus, the 308-residue chain is Aspartate carbamoyltransferase catalytic subunit (308 aa).

2 residues coordinate carbamoyl phosphate: Arg57 and Thr58. Residue Lys86 coordinates L-aspartate. Carbamoyl phosphate contacts are provided by Arg107, His135, and Gln138. L-aspartate contacts are provided by Arg167 and Arg228. Leu267 and Pro268 together coordinate carbamoyl phosphate.

It belongs to the aspartate/ornithine carbamoyltransferase superfamily. ATCase family. In terms of assembly, heterooligomer of catalytic and regulatory chains.

The enzyme catalyses carbamoyl phosphate + L-aspartate = N-carbamoyl-L-aspartate + phosphate + H(+). It participates in pyrimidine metabolism; UMP biosynthesis via de novo pathway; (S)-dihydroorotate from bicarbonate: step 2/3. Functionally, catalyzes the condensation of carbamoyl phosphate and aspartate to form carbamoyl aspartate and inorganic phosphate, the committed step in the de novo pyrimidine nucleotide biosynthesis pathway. This chain is Aspartate carbamoyltransferase catalytic subunit, found in Methanosarcina acetivorans (strain ATCC 35395 / DSM 2834 / JCM 12185 / C2A).